Reading from the N-terminus, the 74-residue chain is uncharacterized protein (74 aa).

This is an uncharacterized protein from Rickettsia conorii (strain ATCC VR-613 / Malish 7).